A 361-amino-acid chain; its full sequence is Histidinol-phosphate aminotransferase (361 aa).

Lys220 carries the N6-(pyridoxal phosphate)lysine modification.

This sequence belongs to the class-II pyridoxal-phosphate-dependent aminotransferase family. Histidinol-phosphate aminotransferase subfamily. In terms of assembly, homodimer. The cofactor is pyridoxal 5'-phosphate.

It carries out the reaction L-histidinol phosphate + 2-oxoglutarate = 3-(imidazol-4-yl)-2-oxopropyl phosphate + L-glutamate. Its pathway is amino-acid biosynthesis; L-histidine biosynthesis; L-histidine from 5-phospho-alpha-D-ribose 1-diphosphate: step 7/9. This chain is Histidinol-phosphate aminotransferase, found in Syntrophus aciditrophicus (strain SB).